A 263-amino-acid polypeptide reads, in one-letter code: 4-hydroxy-tetrahydrodipicolinate reductase (263 aa).

NAD(+) is bound by residues 7–12 (GASGRM) and Asp-33. Arg-34 lines the NADP(+) pocket. NAD(+) is bound by residues 96 to 98 (GTT) and 120 to 123 (APNM). His-153 functions as the Proton donor/acceptor in the catalytic mechanism. His-154 provides a ligand contact to (S)-2,3,4,5-tetrahydrodipicolinate. Lys-157 (proton donor) is an active-site residue. 163 to 164 (GT) provides a ligand contact to (S)-2,3,4,5-tetrahydrodipicolinate.

It belongs to the DapB family.

It is found in the cytoplasm. It catalyses the reaction (S)-2,3,4,5-tetrahydrodipicolinate + NAD(+) + H2O = (2S,4S)-4-hydroxy-2,3,4,5-tetrahydrodipicolinate + NADH + H(+). The catalysed reaction is (S)-2,3,4,5-tetrahydrodipicolinate + NADP(+) + H2O = (2S,4S)-4-hydroxy-2,3,4,5-tetrahydrodipicolinate + NADPH + H(+). It participates in amino-acid biosynthesis; L-lysine biosynthesis via DAP pathway; (S)-tetrahydrodipicolinate from L-aspartate: step 4/4. Its function is as follows. Catalyzes the conversion of 4-hydroxy-tetrahydrodipicolinate (HTPA) to tetrahydrodipicolinate. This is 4-hydroxy-tetrahydrodipicolinate reductase from Ralstonia nicotianae (strain ATCC BAA-1114 / GMI1000) (Ralstonia solanacearum).